The chain runs to 181 residues: Crossover junction endodeoxyribonuclease RuvC (181 aa).

Residues D8, E67, and D139 contribute to the active site. Mg(2+) contacts are provided by D8, E67, and D139.

Belongs to the RuvC family. As to quaternary structure, homodimer which binds Holliday junction (HJ) DNA. The HJ becomes 2-fold symmetrical on binding to RuvC with unstacked arms; it has a different conformation from HJ DNA in complex with RuvA. In the full resolvosome a probable DNA-RuvA(4)-RuvB(12)-RuvC(2) complex forms which resolves the HJ. Mg(2+) is required as a cofactor.

The protein localises to the cytoplasm. The catalysed reaction is Endonucleolytic cleavage at a junction such as a reciprocal single-stranded crossover between two homologous DNA duplexes (Holliday junction).. Functionally, the RuvA-RuvB-RuvC complex processes Holliday junction (HJ) DNA during genetic recombination and DNA repair. Endonuclease that resolves HJ intermediates. Cleaves cruciform DNA by making single-stranded nicks across the HJ at symmetrical positions within the homologous arms, yielding a 5'-phosphate and a 3'-hydroxyl group; requires a central core of homology in the junction. The consensus cleavage sequence is 5'-(A/T)TT(C/G)-3'. Cleavage occurs on the 3'-side of the TT dinucleotide at the point of strand exchange. HJ branch migration catalyzed by RuvA-RuvB allows RuvC to scan DNA until it finds its consensus sequence, where it cleaves and resolves the cruciform DNA. This is Crossover junction endodeoxyribonuclease RuvC from Acinetobacter baylyi (strain ATCC 33305 / BD413 / ADP1).